The following is a 743-amino-acid chain: MSLHREPTATEVKEQKIYREMGLTDEEFALVESILGRLPNYTETGLFSVMWSEHCSYKNSKVLLKKFPIDGDKVLQGPGEGAGIIDIGDEQAVVFKIESHNHPSAIEPYQGAATGVGGILRDVFSMGARPISLLNSLRFGELTSPKVRYLFEEVVAGIAGYGNCVGVPTVGGEVQFDPCYEGNPLVNAMCVGLIDHKDIQKGQAKGVGNTVMYVGASTGRDGIHGATFASEELSEASEEKRPAVQVGDPFMEKLLLEACLELIKSDALVGIQDMGAAGLTSSSAEMASKAGSGIEMNLDHVPQREKGMTPYEMMLSESQERMLIVVKKGREQEIKDIVAHWGLHAVEVGQVTDDKKLRLLHKGEVVADVPVDALAEDAPVYHKPSKVPAYYEAFQSEKTQWIPTIANVKDTLLSLLQQPTIASKEWVYEQYDYMVQTNTVVSPGSDAAVVRIRGTKKALAMTTDCNSRYLFLDPEVGGKIAIAEAARNIVCSGGVPLGVTDCLNYGNPEKPEIFWQLEKSTDGMSEACRELGTPVIGGNVSLYNETNGVAVYPTPVIGMVGLIEDVGHITTQAFKKAGDLIYVIGEAKAEFGGSELQKLVNGEISGKAPAIDLAVEKKRQEQLLEAIRAGAVASAHDIAEGGLAVALAESMMGEAVGADVVIDGEWTTELFAESQSRFLVSVPKEKQAIFESLVEDAIHLGQVTDHPQLNIQDVNGAQVLQASVNEMLEAWKGAIPCLLKSKA.

His-54 is a catalytic residue. ATP-binding residues include Tyr-57 and Lys-96. Position 98 (Glu-98) interacts with Mg(2+). Substrate-binding positions include 99 to 102 (SHNH) and Arg-121. His-100 functions as the Proton acceptor in the catalytic mechanism. Residue Asp-122 participates in Mg(2+) binding. Gln-245 lines the substrate pocket. Position 273 (Asp-273) interacts with Mg(2+). 317–319 (ESQ) provides a ligand contact to substrate. 2 residues coordinate ATP: Asp-501 and Gly-538. Residue Asn-539 participates in Mg(2+) binding. Substrate is bound at residue Ser-541.

It belongs to the FGAMS family. Monomer. Part of the FGAM synthase complex composed of 1 PurL, 1 PurQ and 2 PurS subunits.

The protein resides in the cytoplasm. It carries out the reaction N(2)-formyl-N(1)-(5-phospho-beta-D-ribosyl)glycinamide + L-glutamine + ATP + H2O = 2-formamido-N(1)-(5-O-phospho-beta-D-ribosyl)acetamidine + L-glutamate + ADP + phosphate + H(+). The protein operates within purine metabolism; IMP biosynthesis via de novo pathway; 5-amino-1-(5-phospho-D-ribosyl)imidazole from N(2)-formyl-N(1)-(5-phospho-D-ribosyl)glycinamide: step 1/2. Functionally, part of the phosphoribosylformylglycinamidine synthase complex involved in the purines biosynthetic pathway. Catalyzes the ATP-dependent conversion of formylglycinamide ribonucleotide (FGAR) and glutamine to yield formylglycinamidine ribonucleotide (FGAM) and glutamate. The FGAM synthase complex is composed of three subunits. PurQ produces an ammonia molecule by converting glutamine to glutamate. PurL transfers the ammonia molecule to FGAR to form FGAM in an ATP-dependent manner. PurS interacts with PurQ and PurL and is thought to assist in the transfer of the ammonia molecule from PurQ to PurL. The protein is Phosphoribosylformylglycinamidine synthase subunit PurL of Halalkalibacterium halodurans (strain ATCC BAA-125 / DSM 18197 / FERM 7344 / JCM 9153 / C-125) (Bacillus halodurans).